The sequence spans 430 residues: Serine--tRNA ligase (430 aa).

237-239 (TAE) lines the L-serine pocket. 268–270 (RSE) serves as a coordination point for ATP. Glutamate 291 contacts L-serine. 355–358 (EISS) lines the ATP pocket. Residue serine 391 coordinates L-serine.

It belongs to the class-II aminoacyl-tRNA synthetase family. Type-1 seryl-tRNA synthetase subfamily. In terms of assembly, homodimer. The tRNA molecule binds across the dimer.

It localises to the cytoplasm. It carries out the reaction tRNA(Ser) + L-serine + ATP = L-seryl-tRNA(Ser) + AMP + diphosphate + H(+). The enzyme catalyses tRNA(Sec) + L-serine + ATP = L-seryl-tRNA(Sec) + AMP + diphosphate + H(+). It participates in aminoacyl-tRNA biosynthesis; selenocysteinyl-tRNA(Sec) biosynthesis; L-seryl-tRNA(Sec) from L-serine and tRNA(Sec): step 1/1. In terms of biological role, catalyzes the attachment of serine to tRNA(Ser). Is also able to aminoacylate tRNA(Sec) with serine, to form the misacylated tRNA L-seryl-tRNA(Sec), which will be further converted into selenocysteinyl-tRNA(Sec). The polypeptide is Serine--tRNA ligase (Salmonella schwarzengrund (strain CVM19633)).